The following is a 386-amino-acid chain: Protein RETICULATA-RELATED 4, chloroplastic (386 aa).

Residues 1–61 (MAIASCFFCV…RRVPITPVLS (61 aa)) constitute a chloroplast transit peptide. Positions 61-99 (SASSGNGGSDNNGGGLSGGGGGGDGGKNDGDGHGDEDRD) are disordered. Residues 65-85 (GNGGSDNNGGGLSGGGGGGDG) are compositionally biased toward gly residues. Residues 86-99 (GKNDGDGHGDEDRD) show a composition bias toward basic and acidic residues. 2 consecutive transmembrane segments (helical) span residues 201-221 (VVFADVAMAIIADFMLVYLPA) and 273-293 (KLFAVGTTSSLVGTAITNAFI).

The protein belongs to the RETICULATA family.

The protein resides in the plastid. It localises to the chloroplast membrane. In terms of biological role, may play a role in leaf development. The polypeptide is Protein RETICULATA-RELATED 4, chloroplastic (Arabidopsis thaliana (Mouse-ear cress)).